Here is a 501-residue protein sequence, read N- to C-terminus: Ell-associated factor Eaf (501 aa).

Composition is skewed to polar residues over residues 138-149 (NMGQGQLHSQGA) and 173-192 (ENST…SRRN). 2 disordered regions span residues 138–226 (NMGQ…PAWD) and 256–501 (GHAN…DDDD). 2 stretches are compositionally biased toward low complexity: residues 200-221 (RNSP…SPQS) and 256-270 (GHAN…SATG). Ser202 carries the phosphoserine modification. The span at 271-283 (QTDFGSISSSSHI) shows a compositional bias: polar residues. Low complexity-rich tracts occupy residues 302–314 (QRQS…QQQP) and 329–343 (QQQR…QRPP). A compositionally biased stretch (acidic residues) spans 393–408 (DSSDSDSGSDSDDSTE). 3 stretches are compositionally biased toward low complexity: residues 416–437 (QQPV…HLNQ), 455–471 (QQQQ…QKQQ), and 483–501 (NDLL…DDDD).

Belongs to the EAF family.

It is found in the nucleus. Functionally, promotes transcriptional elongation by Su(Tpl)/ELL. Essential for development. The chain is Ell-associated factor Eaf from Drosophila yakuba (Fruit fly).